We begin with the raw amino-acid sequence, 869 residues long: MNPATMTRQLSSDGRMFASSIITVIPDSSPTAAEAIELSSPLSLPSPTSLLDFLSTSTSRGPARSDTDGDKTQGKEVLDTKPILENSFRRENRVVSGTGGKAATGKKLKRRTESPGNVCQSEIHIVPGERIILRQTRPDKKAAKAKRTKKEDGLINRKLYGRVSKANQTVSLQPETKKSAPKGCNDTTQPADNGHINDLDDGLQLEQAIQRRLDWTPTKDTTIPVIDLVGDSPSSCEKSLSGMRSTRTMLSNYEFSGIVGTLGGSRSEGTPDAPTTKRPVELLKVNNLKEISGLSDSRQSSITEDSESATSKPRRVKAKNPPKSKLTTITSYATAKYTVVEKSVDLDPVETLLSDEPGKEKNVAKRTSGARCAKPGRKKSATTEKKNEPPIFKVVPPLEAFKAFDGQELLFGTSSQLANGHSEDRHEQNEGTSHISNSSAFIPLSRSESSSKAPSQTSLGSGFLKLSSSKNLWSAGARDLTGAVLEIDEIDLSEHWMKPSIFESQPKAPLGCKADTQIPPQLGEIDFDNSCQKPLAAIDPPELVTQSETPSEKGDLHKYIVKPTHINSCSQSGSSISVGSPEKPVQDKPIFSGFTTSELAKKVAAYGFKPIKSRDKMIALLEKCWENRNKTSNSVPKLTPGDGLSQVDESTQGQSLGQHLKPNSIPQTATTQVPKVKPDKRDTKSQGVPVPSRRSTSTSKVSRKRTESPSAILVDDDQRSDSTGDSVPPSRPRRPSKSCTPRDRQKSPESFNLPTIPLTIRSGKIPSTGTASETLPSLSTQITAAIKAQPRLRAFNGVKQPTWYEKILMYDPIQLEDLAVWLNTDGFERIGEDREVCPGLVREWCESKGVCCIWRKQRGVRAHCPLVRA.

A compositionally biased stretch (low complexity) spans 40 to 59 (SPLSLPSPTSLLDFLSTSTS). 7 disordered regions span residues 40–79 (SPLSLPSPTSLLDFLSTSTSRGPARSDTDGDKTQGKEVLD), 92–116 (NRVVSGTGGKAATGKKLKRRTESPG), 165–199 (KANQTVSLQPETKKSAPKGCNDTTQPADNGHINDL), 293–323 (GLSDSRQSSITEDSESATSKPRRVKAKNPPK), 351–388 (TLLSDEPGKEKNVAKRTSGARCAKPGRKKSATTEKKNE), 418–437 (ANGHSEDRHEQNEGTSHISN), and 630–774 (KTSN…ASET). Basic and acidic residues predominate over residues 63 to 79 (ARSDTDGDKTQGKEVLD). 2 stretches are compositionally biased toward polar residues: residues 165–174 (KANQTVSLQP) and 294–311 (LSDSRQSSITEDSESATS). The segment covering 312-322 (KPRRVKAKNPP) has biased composition (basic residues). Composition is skewed to polar residues over residues 647–657 (VDESTQGQSLG) and 664–673 (SIPQTATTQV). Low complexity predominate over residues 688-700 (VPVPSRRSTSTSK). The span at 765–774 (IPSTGTASET) shows a compositional bias: polar residues.

It belongs to the SLX4 family. Forms a heterodimer with SLX1. Phosphorylated in response to DNA damage.

The protein resides in the nucleus. Its function is as follows. Regulatory subunit of the SLX1-SLX4 structure-specific endonuclease that resolves DNA secondary structures generated during DNA repair and recombination. Has endonuclease activity towards branched DNA substrates, introducing single-strand cuts in duplex DNA close to junctions with ss-DNA. The polypeptide is Structure-specific endonuclease subunit SLX4 (Paracoccidioides brasiliensis (strain Pb18)).